The chain runs to 115 residues: Cholecystokinin (115 aa).

The first 20 residues, 1 to 20, serve as a signal peptide directing secretion; the sequence is MKSGVCLCVVMAVLAAGALA. The propeptide occupies 21-70; that stretch reads QPVVPAEATDPVEQRAQEAPRRQLRAVLRTDGEPRARLGALLARYIQQVR. Sulfotyrosine is present on Tyr97. Phe103 is modified (phenylalanine amide). Residues 107–115 constitute a propeptide that is removed on maturation; the sequence is SAEDYEYPS. A sulfotyrosine mark is found at Tyr111 and Tyr113.

The protein belongs to the gastrin/cholecystokinin family. In terms of assembly, binds to CCK-A receptors in the pancreas and CCK-B receptors in the brain. The precursor is cleaved by proteases to produce a number of active cholecystokinins. As to expression, expressed and secreted by discrete enteroendocrine cells that reside as single cells scattered among enterocytes in the mucosa of the small intestine. Released into the blood following ingestion of a meal.

Its subcellular location is the secreted. Functionally, this peptide hormone induces gall bladder contraction and the release of pancreatic enzymes in the gut. Its function in the brain is not clear. Binding to CCK-A receptors stimulates amylase release from the pancreas, binding to CCK-B receptors stimulates gastric acid secretion. The sequence is that of Cholecystokinin (Cck) from Mus musculus (Mouse).